Here is a 955-residue protein sequence, read N- to C-terminus: 4-alpha-glucanotransferase DPE2 (955 aa).

Methionine 1 bears the N-acetylmethionine mark. CBM20 domains follow at residues 13–122 (KSSK…LWQS) and 157–270 (SDQD…PWRG). Residues 925–955 (SGRSVPANVSGEDINKSRGEVIANGSTKPNP) are disordered.

It belongs to the disproportionating enzyme family.

It is found in the cytoplasm. It localises to the cytosol. It catalyses the reaction Transfers a segment of a (1-&gt;4)-alpha-D-glucan to a new position in an acceptor, which may be glucose or a (1-&gt;4)-alpha-D-glucan.. Its activity is regulated as follows. Inactivated in response to cold stress. In terms of biological role, cytosolic alpha-glucanotransferase essential for the cytosolic metabolism of maltose, an intermediate on the pathway by which starch is converted to sucrose in leaves at night. Metabolizes maltose exported from the chloroplast and is specific for beta-maltose. May play a role in freezing tolerance. Temperature drop induces inactivation of DPE2 that leads to rapid accumulation of maltose, a solute that protects cells from freezing damage. The sequence is that of 4-alpha-glucanotransferase DPE2 (DPE2) from Arabidopsis thaliana (Mouse-ear cress).